Reading from the N-terminus, the 647-residue chain is Threonine--tRNA ligase (647 aa).

Residues 1–61 (MIKITFPDGA…EEDGSIEIVT (61 aa)) enclose the TGS domain. The interval 240 to 538 (DHRKLGKELD…LIETYKGAFP (299 aa)) is catalytic. Cysteine 334, histidine 385, and histidine 515 together coordinate Zn(2+).

Belongs to the class-II aminoacyl-tRNA synthetase family. As to quaternary structure, homodimer. Zn(2+) serves as cofactor.

Its subcellular location is the cytoplasm. The catalysed reaction is tRNA(Thr) + L-threonine + ATP = L-threonyl-tRNA(Thr) + AMP + diphosphate + H(+). In terms of biological role, catalyzes the attachment of threonine to tRNA(Thr) in a two-step reaction: L-threonine is first activated by ATP to form Thr-AMP and then transferred to the acceptor end of tRNA(Thr). Also edits incorrectly charged L-seryl-tRNA(Thr). In Streptococcus agalactiae serotype III (strain NEM316), this protein is Threonine--tRNA ligase.